The following is a 554-amino-acid chain: Urocanate hydratase (554 aa).

Residues 52–53, glutamine 130, 176–178, glutamate 196, arginine 201, 242–243, 263–267, 273–274, and tyrosine 322 each bind NAD(+); these read GG, GMG, NA, QTSAH, and YL. Cysteine 410 is a catalytic residue. Glycine 492 contributes to the NAD(+) binding site.

It belongs to the urocanase family. The cofactor is NAD(+).

Its subcellular location is the cytoplasm. It catalyses the reaction 4-imidazolone-5-propanoate = trans-urocanate + H2O. Its pathway is amino-acid degradation; L-histidine degradation into L-glutamate; N-formimidoyl-L-glutamate from L-histidine: step 2/3. Functionally, catalyzes the conversion of urocanate to 4-imidazolone-5-propionate. This Shewanella halifaxensis (strain HAW-EB4) protein is Urocanate hydratase.